We begin with the raw amino-acid sequence, 94 residues long: Pyrimidine/purine nucleoside phosphorylase (94 aa).

Belongs to the nucleoside phosphorylase PpnP family.

It carries out the reaction a purine D-ribonucleoside + phosphate = a purine nucleobase + alpha-D-ribose 1-phosphate. It catalyses the reaction adenosine + phosphate = alpha-D-ribose 1-phosphate + adenine. The enzyme catalyses cytidine + phosphate = cytosine + alpha-D-ribose 1-phosphate. The catalysed reaction is guanosine + phosphate = alpha-D-ribose 1-phosphate + guanine. It carries out the reaction inosine + phosphate = alpha-D-ribose 1-phosphate + hypoxanthine. It catalyses the reaction thymidine + phosphate = 2-deoxy-alpha-D-ribose 1-phosphate + thymine. The enzyme catalyses uridine + phosphate = alpha-D-ribose 1-phosphate + uracil. The catalysed reaction is xanthosine + phosphate = alpha-D-ribose 1-phosphate + xanthine. Its function is as follows. Catalyzes the phosphorolysis of diverse nucleosides, yielding D-ribose 1-phosphate and the respective free bases. Can use uridine, adenosine, guanosine, cytidine, thymidine, inosine and xanthosine as substrates. Also catalyzes the reverse reactions. This is Pyrimidine/purine nucleoside phosphorylase from Pectobacterium carotovorum subsp. carotovorum (strain PC1).